Here is a 485-residue protein sequence, read N- to C-terminus: D-alanine--D-alanyl carrier protein ligase (485 aa).

144 to 145 serves as a coordination point for ATP; the sequence is TS. Asp189 contacts D-alanine. 284 to 289 serves as a coordination point for ATP; the sequence is NTYGPT. Val293 contacts D-alanine. The ATP site is built by Asp365 and Lys473. A D-alanine-binding site is contributed by Lys473.

This sequence belongs to the ATP-dependent AMP-binding enzyme family. DltA subfamily.

It localises to the cytoplasm. The catalysed reaction is holo-[D-alanyl-carrier protein] + D-alanine + ATP = D-alanyl-[D-alanyl-carrier protein] + AMP + diphosphate. It functions in the pathway cell wall biogenesis; lipoteichoic acid biosynthesis. Catalyzes the first step in the D-alanylation of lipoteichoic acid (LTA), the activation of D-alanine and its transfer onto the D-alanyl carrier protein (Dcp) DltC. In an ATP-dependent two-step reaction, forms a high energy D-alanyl-AMP intermediate, followed by transfer of the D-alanyl residue as a thiol ester to the phosphopantheinyl prosthetic group of the Dcp. D-alanylation of LTA plays an important role in modulating the properties of the cell wall in Gram-positive bacteria, influencing the net charge of the cell wall. This chain is D-alanine--D-alanyl carrier protein ligase, found in Staphylococcus aureus (strain bovine RF122 / ET3-1).